Here is a 123-residue protein sequence, read N- to C-terminus: Small ribosomal subunit protein uS12 (123 aa).

3-methylthioaspartic acid is present on D89.

The protein belongs to the universal ribosomal protein uS12 family. As to quaternary structure, part of the 30S ribosomal subunit. Contacts proteins S8 and S17. May interact with IF1 in the 30S initiation complex.

With S4 and S5 plays an important role in translational accuracy. Functionally, interacts with and stabilizes bases of the 16S rRNA that are involved in tRNA selection in the A site and with the mRNA backbone. Located at the interface of the 30S and 50S subunits, it traverses the body of the 30S subunit contacting proteins on the other side and probably holding the rRNA structure together. The combined cluster of proteins S8, S12 and S17 appears to hold together the shoulder and platform of the 30S subunit. The sequence is that of Small ribosomal subunit protein uS12 from Caulobacter vibrioides (strain ATCC 19089 / CIP 103742 / CB 15) (Caulobacter crescentus).